Consider the following 832-residue polypeptide: Prickle-like protein 1 (832 aa).

The 109-residue stretch at 14 to 122 (FGCQRSSTSD…TIKLLSRAVM (109 aa)) folds into the PET domain. LIM zinc-binding domains are found at residues 124–188 (AVCE…ELLK), 189–249 (PRCS…LYAE), and 250–313 (YCET…EDIH). The disordered stretch occupies residues 314–342 (ASDSSDSAFQSARSRDSRRSVRMGRSSRS). 3 positions are modified to phosphoserine: Ser315, Ser592, and Ser595. 2 disordered regions span residues 663-688 (HFEERGSRPHHHRHRRSRKSRSDNAL) and 765-832 (SSST…CIIS). Residues 670 to 681 (RPHHHRHRRSRK) show a composition bias toward basic residues. Ser684 bears the Phosphoserine mark. Residues 798-815 (DLSSPASALPTPQFTQRT) show a composition bias toward polar residues. Residues 816–832 (TKSKKKKGHKGKNCIIS) show a composition bias toward basic residues. Cys829 carries the post-translational modification Cysteine methyl ester. A lipid anchor (S-farnesyl cysteine) is attached at Cys829. The propeptide at 830–832 (IIS) is removed in mature form.

The protein belongs to the prickle / espinas / testin family. As to quaternary structure, interacts with REST.

Its subcellular location is the nucleus membrane. It localises to the cytoplasm. It is found in the cytosol. Functionally, involved in the planar cell polarity pathway that controls convergent extension during gastrulation and neural tube closure. Convergent extension is a complex morphogenetic process during which cells elongate, move mediolaterally, and intercalate between neighboring cells, leading to convergence toward the mediolateral axis and extension along the anteroposterior axis. Necessary for nuclear localization of REST. May serve as nuclear receptor. This chain is Prickle-like protein 1 (Prickle1), found in Mus musculus (Mouse).